A 428-amino-acid chain; its full sequence is MSKSLQAIRGMNDILPDQSPLWRYFEGTVAGLLDSYGYSQIRTPIVEFTELFKRSIGEVTDIVEKEMYTFQDNKDSLTLRPEGTAACVRAVLEHGIIGNGQVQKLWYVGPMFRHERPQLGRYRQFHQIGVEVFNLAGPDIDAELIMLTWRLWALLGIQDAVTLELNSLGTSEARARYRDALVEFLSQRIDQLDEDSQRRLKSNPLRILDSKNEGTQAALVGAPKLEEYLDEESRVHFEGVKARLDAAGIPFVINTKLVRGLDYYSKTVFEWVTDKLGAQGTVCAGGRYDGLVEQMGGKPTAGVGFAMGIERLLLLIETLGQVPESISRTIDVYLCAFGEQAELAGLKISEQLRDRLPNLRLAVNAGGGNFKNQFKKADKSGALFALILGDDELAKQEIGVKPLRGQGEQQNIAWDALAAHLETAIAQA.

This sequence belongs to the class-II aminoacyl-tRNA synthetase family. As to quaternary structure, homodimer.

It is found in the cytoplasm. The catalysed reaction is tRNA(His) + L-histidine + ATP = L-histidyl-tRNA(His) + AMP + diphosphate + H(+). This chain is Histidine--tRNA ligase, found in Pseudomonas entomophila (strain L48).